A 152-amino-acid polypeptide reads, in one-letter code: Protein-export protein SecB (152 aa).

This sequence belongs to the SecB family. In terms of assembly, homotetramer, a dimer of dimers. One homotetramer interacts with 1 SecA dimer.

Its subcellular location is the cytoplasm. Its function is as follows. One of the proteins required for the normal export of preproteins out of the cell cytoplasm. It is a molecular chaperone that binds to a subset of precursor proteins, maintaining them in a translocation-competent state. It also specifically binds to its receptor SecA. The chain is Protein-export protein SecB from Acinetobacter baumannii (strain AB307-0294).